Consider the following 83-residue polypeptide: Cell division topological specificity factor (83 aa).

It belongs to the MinE family.

In terms of biological role, prevents the cell division inhibition by proteins MinC and MinD at internal division sites while permitting inhibition at polar sites. This ensures cell division at the proper site by restricting the formation of a division septum at the midpoint of the long axis of the cell. The sequence is that of Cell division topological specificity factor from Deinococcus deserti (strain DSM 17065 / CIP 109153 / LMG 22923 / VCD115).